The following is a 478-amino-acid chain: Lysosome membrane protein 2 (478 aa).

Residues 1–4 (MGRC) are Cytoplasmic-facing. A helical membrane pass occupies residues 5 to 27 (CFYTAGTLSLLLLVTSVTLLVAR). At 28 to 433 (VFQKAVDQTI…QLKSVINTTL (406 aa)) the chain is on the lumenal side. 4 N-linked (GlcNAc...) asparagine glycosylation sites follow: Asn45, Asn68, Asn105, and Asn122. Residues 155–191 (LIEAMLKAYQQKLFVIHTVHELLWGYKDEILSLVHIF) form an important for interaction with GBA1 region. N-linked (GlcNAc...) asparagine glycosylation is found at Asn206, Asn224, Asn249, and Asn304. Intrachain disulfides connect Cys274–Cys329 and Cys312–Cys318. N-linked (GlcNAc...) asparagine glycosylation is found at Asn325, Asn412, and Asn430. Residues 434 to 459 (VVTNIPYIIMALGVFFGLVFTWLACR) traverse the membrane as a helical segment. Topologically, residues 460-478 (GQGSMDEGTADERAPLIRT) are cytoplasmic.

The protein belongs to the CD36 family. Interacts with GBA1. Post-translationally, acylated by palmitic acid group(s). Heavily glycosylated. In terms of tissue distribution, detected in the extracts of brain, heart, lung, liver and kidney.

Its subcellular location is the lysosome membrane. Functionally, acts as a lysosomal receptor for glucosylceramidase (GBA1) targeting. This is Lysosome membrane protein 2 (Scarb2) from Mus musculus (Mouse).